The chain runs to 107 residues: Large ribosomal subunit protein uL24 (107 aa).

This sequence belongs to the universal ribosomal protein uL24 family. In terms of assembly, part of the 50S ribosomal subunit.

Its function is as follows. One of two assembly initiator proteins, it binds directly to the 5'-end of the 23S rRNA, where it nucleates assembly of the 50S subunit. Functionally, one of the proteins that surrounds the polypeptide exit tunnel on the outside of the subunit. This is Large ribosomal subunit protein uL24 from Natranaerobius thermophilus (strain ATCC BAA-1301 / DSM 18059 / JW/NM-WN-LF).